Here is a 192-residue protein sequence, read N- to C-terminus: Fe/S biogenesis protein NfuA (192 aa).

Positions 149 and 152 each coordinate [4Fe-4S] cluster.

It belongs to the NfuA family. Homodimer. It depends on [4Fe-4S] cluster as a cofactor.

Involved in iron-sulfur cluster biogenesis. Binds a 4Fe-4S cluster, can transfer this cluster to apoproteins, and thereby intervenes in the maturation of Fe/S proteins. Could also act as a scaffold/chaperone for damaged Fe/S proteins. The protein is Fe/S biogenesis protein NfuA of Shewanella loihica (strain ATCC BAA-1088 / PV-4).